The following is a 294-amino-acid chain: Proline iminopeptidase (294 aa).

Positions 28-278 constitute an AB hydrolase-1 domain; sequence PLLLLHGGPG…GCGHMPFVQE (251 aa). Catalysis depends on Ser-106, which acts as the Nucleophile. Residue Asp-245 is part of the active site. His-272 functions as the Proton donor in the catalytic mechanism.

It belongs to the peptidase S33 family. In terms of assembly, homotrimer.

Its subcellular location is the cell envelope. It carries out the reaction Release of N-terminal proline from a peptide.. With respect to regulation, inhibited by 3,4-DCI, but no significant effect on enzyme activity by pepstatin A, E-64, 1,10-phenanthroline or EDTA. Its function is as follows. Releases the N-terminal proline from various substrates. Cleaves Pro-betaNA (L-prolyl-beta-naphthylamide) effectively. The sequence is that of Proline iminopeptidase (pip) from Lactobacillus delbrueckii subsp. lactis.